The following is a 157-amino-acid chain: Peptide methionine sulfoxide reductase MsrA (157 aa).

Residue Cys-13 is part of the active site.

Belongs to the MsrA Met sulfoxide reductase family.

It carries out the reaction L-methionyl-[protein] + [thioredoxin]-disulfide + H2O = L-methionyl-(S)-S-oxide-[protein] + [thioredoxin]-dithiol. The enzyme catalyses [thioredoxin]-disulfide + L-methionine + H2O = L-methionine (S)-S-oxide + [thioredoxin]-dithiol. Has an important function as a repair enzyme for proteins that have been inactivated by oxidation. Catalyzes the reversible oxidation-reduction of methionine sulfoxide in proteins to methionine. This Methanococcus maripaludis (strain C7 / ATCC BAA-1331) protein is Peptide methionine sulfoxide reductase MsrA.